The primary structure comprises 181 residues: Interleukin-10 (181 aa).

The N-terminal stretch at 1–19 is a signal peptide; it reads MHGSALLCCCLVLLAGVGA. 2 disulfides stabilise this stretch: Cys-31-Cys-129 and Cys-81-Cys-135. A glycan (N-linked (GlcNAc...) asparagine) is linked at Asn-137.

The protein belongs to the IL-10 family. In terms of assembly, homodimer. Interacts with IL10RA and IL10RB.

It localises to the secreted. Functionally, major immune regulatory cytokine that acts on many cells of the immune system where it has profound anti-inflammatory functions, limiting excessive tissue disruption caused by inflammation. Mechanistically, IL10 binds to its heterotetrameric receptor comprising IL10RA and IL10RB leading to JAK1 and STAT2-mediated phosphorylation of STAT3. In turn, STAT3 translocates to the nucleus where it drives expression of anti-inflammatory mediators. Targets antigen-presenting cells (APCs) such as macrophages and monocytes and inhibits their release of pro-inflammatory cytokines including granulocyte-macrophage colony-stimulating factor /GM-CSF, granulocyte colony-stimulating factor/G-CSF, IL-1 alpha, IL-1 beta, IL-6, IL-8 and TNF-alpha. Also interferes with antigen presentation by reducing the expression of MHC-class II and co-stimulatory molecules, thereby inhibiting their ability to induce T cell activation. In addition, controls the inflammatory response of macrophages by reprogramming essential metabolic pathways including mTOR signaling. This is Interleukin-10 (IL10) from Canis lupus familiaris (Dog).